Here is a 94-residue protein sequence, read N- to C-terminus: Large ribosomal subunit protein uL23 (94 aa).

The protein belongs to the universal ribosomal protein uL23 family. As to quaternary structure, part of the 50S ribosomal subunit. Contacts protein L29, and trigger factor when it is bound to the ribosome.

One of the early assembly proteins it binds 23S rRNA. One of the proteins that surrounds the polypeptide exit tunnel on the outside of the ribosome. Forms the main docking site for trigger factor binding to the ribosome. In Roseiflexus castenholzii (strain DSM 13941 / HLO8), this protein is Large ribosomal subunit protein uL23.